Reading from the N-terminus, the 298-residue chain is tRNA dimethylallyltransferase (298 aa).

10 to 17 contributes to the ATP binding site; sequence GATATGKS. 12 to 17 provides a ligand contact to substrate; it reads TATGKS. The interval 35–38 is interaction with substrate tRNA; the sequence is DSRQ.

This sequence belongs to the IPP transferase family. As to quaternary structure, monomer. It depends on Mg(2+) as a cofactor.

The enzyme catalyses adenosine(37) in tRNA + dimethylallyl diphosphate = N(6)-dimethylallyladenosine(37) in tRNA + diphosphate. Its function is as follows. Catalyzes the transfer of a dimethylallyl group onto the adenine at position 37 in tRNAs that read codons beginning with uridine, leading to the formation of N6-(dimethylallyl)adenosine (i(6)A). The sequence is that of tRNA dimethylallyltransferase from Picosynechococcus sp. (strain ATCC 27264 / PCC 7002 / PR-6) (Agmenellum quadruplicatum).